The sequence spans 105 residues: uncharacterized protein (105 aa).

S2 bears the N-acetylserine mark.

This is an uncharacterized protein from Saccharomyces cerevisiae (strain ATCC 204508 / S288c) (Baker's yeast).